A 93-amino-acid polypeptide reads, in one-letter code: Bombyxin B-11 (93 aa).

The first 22 residues, 1-22, serve as a signal peptide directing secretion; sequence MMKTAVMFILVVVISLTYSSEE. Disulfide bonds link C30-C75, C42-C92, and C74-C79. A propeptide spans 49–64 (bombyxin B-11 C peptide); sequence GGAQYAPYWQETYLRS.

This sequence belongs to the insulin family. In terms of assembly, heterodimer of a B chain and an A chain linked by two disulfide bonds.

The protein resides in the secreted. Brain peptide responsible for activation of prothoracic glands to produce ecdysone in insects. This chain is Bombyxin B-11 (BBXB11), found in Bombyx mori (Silk moth).